We begin with the raw amino-acid sequence, 53 residues long: Metallocarboxypeptidase inhibitor b (53 aa).

Intrachain disulfides connect cysteine 9–cysteine 23, cysteine 15–cysteine 51, and cysteine 27–cysteine 38. Alanine 53 lines the Zn(2+) pocket.

Metallocarboxypeptidase inhibitor. Has an inhibitory effect on bovine CPA1 and porcine CPB1. Does not inhibit D.melanogaster svr (carboxypeptidase D). Shows no activity against serine proteases subtilisin or bovine trypsin, cysteine protease papain, and aspartyl protease porcine pepsin. The sequence is that of Metallocarboxypeptidase inhibitor b from Nerita versicolor (Four-tooth nerite).